A 735-amino-acid chain; its full sequence is Catalase-peroxidase (735 aa).

Composition is skewed to polar residues over residues 1–10 (MENQNRQNAA) and 17–26 (SVTNQSSNRT). The interval 1-30 (MENQNRQNAAQCPFHGSVTNQSSNRTTNKD) is disordered. The segment at residues 100–223 (WHSAGTYRIG…LAAVQMGLIY (124 aa)) is a cross-link (tryptophyl-tyrosyl-methioninium (Trp-Tyr) (with M-249)). The active-site Proton acceptor is the H101. Residues 223 to 249 (YVNPEGPDGKPDPKAAARDIRETFRRM) constitute a cross-link (tryptophyl-tyrosyl-methioninium (Tyr-Met) (with W-100)). H264 is a binding site for heme b.

This sequence belongs to the peroxidase family. Peroxidase/catalase subfamily. Homodimer or homotetramer. It depends on heme b as a cofactor. In terms of processing, formation of the three residue Trp-Tyr-Met cross-link is important for the catalase, but not the peroxidase activity of the enzyme.

The enzyme catalyses H2O2 + AH2 = A + 2 H2O. The catalysed reaction is 2 H2O2 = O2 + 2 H2O. Functionally, bifunctional enzyme with both catalase and broad-spectrum peroxidase activity. Also displays NADH oxidase, INH lyase and isonicotinoyl-NAD synthase activities. The sequence is that of Catalase-peroxidase from Geobacillus stearothermophilus (Bacillus stearothermophilus).